An 831-amino-acid polypeptide reads, in one-letter code: MLTIQFLCPLPNGLHARPAWELKEQCSQWQSEITFINHRQNAKADAKSSLALIGTGTLFNDSCSLNISGSDEEQARRVLEEYIQVRFIDSDSVQPTQAELTAHPLPRSLSRLNPDLLYGNVLASGVGVGTLTLLQSDSLDSYRAIPASAQDSTRLEHSLATLAEQLNQQLRERDGESKTILSAHLSLIQDDEFAGNIRRLMTEQHQGLGAAIISNMEQVCAKLSASASDYLRERVSDIRDISEQLLHITWPELKPRNKLVLEKPTILVAEDLTPSQFLSLDLKNLAGMILEKTGRTSHTLILARASAIPVLSGLPLDAIARYAGQPAVLDAQCGVLAINPNDAVSGYYQVAQTLADKRQKQQAQAAAQLAYSRDNKRIDIAANIGTALEAPGAFANGAEGVGLFRTEMLYMDRDSAPDEQEQFEAYQQVLLAAGDKPIIFRTMDIGGDKSIPYLNIPQEENPFLGYRAVRIYPEFAGLFRTQLRAILRAASFGNAQLMIPMVHSLDQILWVKGEIQKAIVELKRDGLRHAETITLGIMVEVPSVCYIIDHFCDEVDFFSIGSNDMTQYLYAVDRNNPRVSPLYNPITPSFLRMLQQIVTTAHQRGKWVGICGELGGESRYLPLLLGLGLDELSMSSPRIPAVKSQLRQLDSEACRELARQACECRSAQEIEALLTAFTPEEDVRPLLALENIFVDQDFSNKEQAIQFLCGNLGVNGRTEHPFELEEDVWQREEIVTTGVGFGVAIPHTKSQWIRHSSISIARLAKPIGWQSEMGEVELVIMLTLGANEGMNHVKVFSQLARKLVNKNFRQSLFAAQDAQSILTLLETELTF.

The region spanning 1-90 (MLTIQFLCPL…EYIQVRFIDS (90 aa)) is the HPr domain. Histidine 15 functions as the Pros-phosphohistidine intermediate; for HPr activity in the catalytic mechanism. Residue histidine 15 is modified to Phosphohistidine; by EI. Residues 119–650 (GNVLASGVGV…AVKSQLRQLD (532 aa)) are PTS EI. Histidine 298 acts as the Tele-phosphohistidine intermediate; for PTS EI activity in catalysis. Histidine 298 carries the post-translational modification Phosphohistidine; by autocatalysis. Residues arginine 405 and arginine 441 each coordinate phosphoenolpyruvate. Glutamate 540 and aspartate 564 together coordinate Mg(2+). Phosphoenolpyruvate is bound by residues 563–564 (ND) and arginine 574. Cysteine 611 serves as the catalytic Proton donor; for EI activity. The 144-residue stretch at 685–828 (PLLALENIFV…QSILTLLETE (144 aa)) folds into the PTS EIIA type-2 domain. Histidine 747 acts as the Tele-phosphohistidine intermediate; for PTS EIIA activity in catalysis. Histidine 747 bears the Phosphohistidine; by HPr mark.

The protein belongs to the PEP-utilizing enzyme family. Mg(2+) is required as a cofactor.

It localises to the cytoplasm. The enzyme catalyses L-histidyl-[protein] + phosphoenolpyruvate = N(pros)-phospho-L-histidyl-[protein] + pyruvate. The catalysed reaction is D-fructose(out) + N(pros)-phospho-L-histidyl-[protein] = D-fructose 1-phosphate(in) + L-histidyl-[protein]. Multifunctional protein that includes general (non sugar-specific) and sugar-specific components of the phosphoenolpyruvate-dependent sugar phosphotransferase system (sugar PTS). This major carbohydrate active transport system catalyzes the phosphorylation of incoming sugar substrates concomitantly with their translocation across the cell membrane. The enzyme II FryABC PTS system is involved in fructose transport. This chain is Multiphosphoryl transfer protein 1 (fryA), found in Escherichia coli (strain K12).